Reading from the N-terminus, the 199-residue chain is Thymidine kinase (199 aa).

ATP is bound by residues Gly23–Thr30 and Asp95–Gln98. Glu96 functions as the Proton acceptor in the catalytic mechanism. The Zn(2+) site is built by Cys152, Cys155, Cys184, and Cys187.

It belongs to the thymidine kinase family. In terms of assembly, homotetramer.

The protein resides in the cytoplasm. The enzyme catalyses thymidine + ATP = dTMP + ADP + H(+). The polypeptide is Thymidine kinase (Bacteroides thetaiotaomicron (strain ATCC 29148 / DSM 2079 / JCM 5827 / CCUG 10774 / NCTC 10582 / VPI-5482 / E50)).